A 152-amino-acid chain; its full sequence is MFRGHSNRSLDPKGRLMLPPEFREEIFRLVPDGRVMLTNNFDGAISGYPMPEWEAVEASFRAGNTLMPGFRDIERFFIAGATEVTVDKQGRILIPPYLRTYAGLDKEMVLAGVGTKFEIWDQGRFEERLRQTAANFNAHMEAMAASGVSLRF.

SpoVT-AbrB domains follow at residues 5–52 and 81–124; these read HSNR…PMPE and ATEV…DQGR.

This sequence belongs to the MraZ family. Forms oligomers.

It is found in the cytoplasm. Its subcellular location is the nucleoid. The sequence is that of Transcriptional regulator MraZ from Solidesulfovibrio magneticus (strain ATCC 700980 / DSM 13731 / RS-1) (Desulfovibrio magneticus).